The primary structure comprises 434 residues: Nicotinate phosphoribosyltransferase (434 aa).

At H242 the chain carries Phosphohistidine; by autocatalysis.

It belongs to the NAPRTase family. Post-translationally, transiently phosphorylated on a His residue during the reaction cycle. Phosphorylation strongly increases the affinity for substrates and increases the rate of nicotinate D-ribonucleotide production. Dephosphorylation regenerates the low-affinity form of the enzyme, leading to product release.

It catalyses the reaction nicotinate + 5-phospho-alpha-D-ribose 1-diphosphate + ATP + H2O = nicotinate beta-D-ribonucleotide + ADP + phosphate + diphosphate. The protein operates within cofactor biosynthesis; NAD(+) biosynthesis; nicotinate D-ribonucleotide from nicotinate: step 1/1. Its function is as follows. Catalyzes the synthesis of beta-nicotinate D-ribonucleotide from nicotinate and 5-phospho-D-ribose 1-phosphate at the expense of ATP. The sequence is that of Nicotinate phosphoribosyltransferase from Brucella melitensis biotype 1 (strain ATCC 23456 / CCUG 17765 / NCTC 10094 / 16M).